Here is a 535-residue protein sequence, read N- to C-terminus: Flavin-containing monooxygenase 2 (535 aa).

At Ala2 the chain carries N-acetylalanine. Residues 9–13 (GAGVS), Glu32, 40–41 (VW), and 61–62 (NT) contribute to the FAD site. NADP(+) contacts are provided by residues 60 to 61 (TN) and 195 to 198 (SGSD). Lys492 is covalently cross-linked (Glycyl lysine isopeptide (Lys-Gly) (interchain with G-Cter in SUMO)). The helical transmembrane segment at 510 to 530 (FSVSFLLKILGLLAVVVAFFC) threads the bilayer.

Belongs to the FMO family. It depends on FAD as a cofactor. Mg(2+) serves as cofactor. As to expression, expressed in lung (at protein level). Expressed predominantly in lung, and at a much lesser extent in kidney. Also expressed in fetal lung, but not in liver, kidney and brain.

Its subcellular location is the microsome membrane. It localises to the endoplasmic reticulum membrane. Its function is as follows. Catalyzes the oxidative metabolism of numerous xenobiotics, including mainly therapeutic drugs and insecticides that contain a soft nucleophile, most commonly nitrogen and sulfur and participates to their bioactivation. Specifically catalyzes S-oxygenation of sulfur derived compounds such as thioureas-derived compounds, thioetherorganophosphates to their sulfenic acid. In vitro, catalyzes S-oxygenation of the second-line antitubercular drugs thiacetazone (TAZ) and ethionamide (ETA), forming a sulfinic acid and a carbodiimide via a postulated sulfenic acid intermediate. Also catalyzes S-oxygenation of the thioether-containing organophosphate insecticides, phorate and disulfoton. This chain is Flavin-containing monooxygenase 2, found in Homo sapiens (Human).